Here is an 81-residue protein sequence, read N- to C-terminus: Toxin MIT1 (81 aa).

5 cysteine pairs are disulfide-bonded: cysteine 7–cysteine 19, cysteine 13–cysteine 31, cysteine 18–cysteine 59, cysteine 41–cysteine 67, and cysteine 61–cysteine 77.

The protein belongs to the AVIT (prokineticin) family. In terms of tissue distribution, expressed by the venom gland.

It localises to the secreted. Its function is as follows. Potent agonist for both PKR1/PROKR1 and PKR2/PROKR2. Potently contracts gastrointestinal (GI) smooth muscle. The polypeptide is Toxin MIT1 (Dendroaspis polylepis polylepis (Black mamba)).